We begin with the raw amino-acid sequence, 305 residues long: Coenzyme PQQ synthesis protein B (305 aa).

Belongs to the PqqB family.

The protein operates within cofactor biosynthesis; pyrroloquinoline quinone biosynthesis. Its function is as follows. May be involved in the transport of PQQ or its precursor to the periplasm. In Methylobacillus flagellatus (strain ATCC 51484 / DSM 6875 / VKM B-1610 / KT), this protein is Coenzyme PQQ synthesis protein B.